We begin with the raw amino-acid sequence, 759 residues long: TSK-associating protein 1 (759 aa).

The first 29 residues, 1–29 (MEIYTMKTNFLVLALSLCILLSSFHEVSC), serve as a signal peptide directing secretion. The disordered stretch occupies residues 55–74 (GKDDEDQSAKIQSENQNNTT). Positions 63–74 (AKIQSENQNNTT) are enriched in polar residues. EFE repeat repeat units lie at residues 91 to 138 (VGSV…DEEL), 139 to 176 (SAHRQKMLEEIEHEFEAASDSLKQLKTDDVNEGNDEEH), 177 to 215 (SAKRQSLLEEIEREFEAATKELEQLKVNDFTGDKDDEEH), 216 to 254 (SAKRKSMLEAIEREFEAAMEGIEALKVSDSTGSGDDEEQ), 255 to 293 (SAKRLSMLEEIEREFEAASKGLEQLRASDSTADNNEEEH), 294 to 329 (AAKGQSLLEEIEREFEAATESLKQLQVDDSTEDKEH), 330 to 368 (FTAAKRQSLLEEIEREFEAATKDLKQLNDFTEGSADDEQ), 369 to 407 (SAKRNKMLEDIEREFEAATIGLEQLKANDFSEGNNNEEQ), 408 to 443 (SAKRKSMLEEIEREFEAAIGGLKQIKVDDSRNLEEE), and 444 to 473 (SAKRKIILEEMEREFEEAHSGINAKADKEE). Positions 91–473 (VGSVSDESVG…GINAKADKEE (383 aa)) are 10 X approximate EFE repeat. Coiled coils occupy residues 142 to 461 (RQKM…FEEA) and 685 to 734 (IKKL…AKDE). Disordered regions lie at residues 154-184 (EAASDSLKQLKTDDVNEGNDEEHSAKRQSLL), 200-219 (QLKVNDFTGDKDDEEHSAKR), 271-332 (AASK…HFTA), and 393-414 (LKANDFSEGNNNEEQSAKRKSM).

In terms of assembly, homomultimer. Interacts (via C-terminal domain) with GIP1, CSN1 (via N-terminal domain) and TSK (via TPR repeats). Post-translationally, binds calcium through the EFE repeats. Expressed preferentially in flowers and shoot apex.

It localises to the endoplasmic reticulum lumen. It is found in the nucleus envelope. The protein localises to the cytoplasm. Involved in seedling development in the dark. May be involved, when interacting with TSK, in the organization of spindle microtubules and may participate, when interacting with GIP1, in structural links between the nuclear envelope and the cytoskeleton. The protein is TSK-associating protein 1 (TSA1) of Arabidopsis thaliana (Mouse-ear cress).